Reading from the N-terminus, the 70-residue chain is Large ribosomal subunit protein bL28 (70 aa).

The disordered stretch occupies residues 1 to 26 (MAKRCEVCGKAPRSGNTVSHSDKKSG).

It belongs to the bacterial ribosomal protein bL28 family.

The chain is Large ribosomal subunit protein bL28 (rpmB) from Thermotoga maritima (strain ATCC 43589 / DSM 3109 / JCM 10099 / NBRC 100826 / MSB8).